Consider the following 453-residue polypeptide: Proton extrusion protein PxcA (453 aa).

Positions 147 to 189 (SQDKETQTLDNKSTNQTNSKLSNNNKISSGQNDSRLESASQKT) are disordered. Over residues 154–163 (TLDNKSTNQT) the composition is skewed to polar residues. Positions 164-175 (NSKLSNNNKISS) are enriched in low complexity. Residues 176–189 (GQNDSRLESASQKT) show a composition bias toward polar residues. A run of 4 helical transmembrane segments spans residues 235-255 (FILLLIIVPLLTHQLTKTFLL), 330-350 (SIGNVFADLFSVTAFAIVIVS), 377-397 (LIILFTDMFVGFHSPHGWEVI), and 413-433 (FNFLFIATFPVILDTVLKYWI).

The protein belongs to the CemA family.

It is found in the cell inner membrane. Required for H(+) efflux immediately after light irradiation to form a rapid H(+) concentration gradient across the thylakoid membranes. Together with PxcL, contributes to transient H(+) uptake following dark to light transition. This chain is Proton extrusion protein PxcA, found in Crocosphaera subtropica (strain ATCC 51142 / BH68) (Cyanothece sp. (strain ATCC 51142)).